A 485-amino-acid chain; its full sequence is Carbohydrate sulfotransferase 7 (485 aa).

Residues 1–12 (MKGRRRRRREYC) lie on the Cytoplasmic side of the membrane. Residues 13 to 33 (KFTLLLALYTLLLLLVPSVLD) traverse the membrane as a helical; Signal-anchor for type II membrane protein segment. Residues 34–485 (SGSEQDKGGR…PLETNANWAT (452 aa)) are Lumenal-facing. The segment at 66-88 (EQGAEVRFQAEGNPDRSPRPQGN) is disordered. Asparagine 88 carries N-linked (GlcNAc...) asparagine glycosylation. 109–115 (WRTGSSF) is a binding site for 3'-phosphoadenylyl sulfate. The N-linked (GlcNAc...) asparagine glycan is linked to asparagine 185. Residue 277–285 (RDPRAVHNS) coordinates 3'-phosphoadenylyl sulfate. The N-linked (GlcNAc...) asparagine glycan is linked to asparagine 406. Serine 461 carries the phosphoserine modification. Residues 465 to 475 (RDVKTVRKGET) show a composition bias toward basic and acidic residues. A disordered region spans residues 465 to 485 (RDVKTVRKGETPLETNANWAT).

This sequence belongs to the sulfotransferase 1 family. Gal/GlcNAc/GalNAc subfamily.

Its subcellular location is the golgi apparatus membrane. The enzyme catalyses chondroitin beta-D-glucuronate + n 3'-phosphoadenylyl sulfate = chondroitin 6'-sulfate + n adenosine 3',5'-bisphosphate + n H(+). Functionally, sulfotransferase that utilizes 3'-phospho-5'-adenylyl sulfate (PAPS) as sulfonate donor to catalyze the transfer of sulfate to position 6 of non-reducing N-acetylglucosamine (GlcNAc) residues. Preferentially acts on mannose-linked GlcNAc. Also able to catalyze the transfer of sulfate to position 6 of the N-acetylgalactosamine (GalNAc) residue of chondroitin. Also acts on core 2 mucin-type oligosaccharide and N-acetyllactosamine oligomer with a lower efficiency. Has weak or no activity toward keratan sulfate and oligosaccharides containing the Galbeta1-4GlcNAc. Catalyzes 6-O-sulfation of beta-benzyl GlcNAc but not alpha- or beta-benzyl GalNAc. This is Carbohydrate sulfotransferase 7 (Chst7) from Rattus norvegicus (Rat).